The primary structure comprises 324 residues: Calmodulin-like protein 12 (324 aa).

EF-hand domains lie at 8–43 (DQIT…IGEK), 44–79 (PTKA…NQGH), 97–132 (DQIT…LGKN), 133–168 (RTKA…NQGH), 187–222 (DQIL…LGET), and 223–258 (QTKA…KMID). 30 residues coordinate Ca(2+): aspartate 21, asparagine 23, aspartate 25, serine 27, glutamate 32, aspartate 57, aspartate 59, aspartate 61, threonine 63, glutamate 68, aspartate 110, asparagine 112, aspartate 114, serine 116, glutamate 121, aspartate 146, aspartate 148, aspartate 150, threonine 152, glutamate 157, aspartate 200, asparagine 202, aspartate 204, tyrosine 206, glutamate 211, aspartate 236, aspartate 238, aspartate 240, threonine 242, and glutamate 247.

This sequence belongs to the calmodulin family. In terms of assembly, interacts with PID. Binds to ABCG36.

Its function is as follows. Potential calcium sensor that binds calcium in vitro. In Arabidopsis thaliana (Mouse-ear cress), this protein is Calmodulin-like protein 12.